Here is a 21-residue protein sequence, read N- to C-terminus: Nigrocin-2 (21 aa).

The cysteines at positions 15 and 21 are disulfide-linked.

Expressed by the skin dorsal glands.

Its subcellular location is the secreted. In terms of biological role, thanks to its single linear amphipathic alpha-helix, may integrate into membrane phospholipids, leading to lysis of the membrane. Shows antibacterial activity against both Gram-positive and Gram-negative bacteria and against the fungus C.albicans. Has no hemolytic activity. The protein is Nigrocin-2 of Pelophylax nigromaculatus (Black-spotted frog).